Here is a 615-residue protein sequence, read N- to C-terminus: Medium-chain acyl-CoA ligase ACSF2, mitochondrial (615 aa).

A mitochondrion-targeting transit peptide spans 1-49 (MAVYLGMLRLGRLCVASLGARGPRTPLSRPWPNSKLQGVRAFSSGMVDC). Residue lysine 179 is modified to N6-acetyllysine. Lysine 182 bears the N6-acetyllysine; alternate mark. Lysine 182 bears the N6-succinyllysine; alternate mark. Lysine 199 carries the post-translational modification N6-acetyllysine. 263–271 (TSGTTGNPK) contacts ATP. N6-acetyllysine occurs at positions 340 and 398. Lysine 478 is subject to N6-succinyllysine. Aspartate 493 and arginine 508 together coordinate ATP. An N6-acetyllysine modification is found at lysine 510. N6-acetyllysine; alternate is present on residues lysine 544 and lysine 570. N6-succinyllysine; alternate is present on residues lysine 544 and lysine 570. Lysine 599 serves as a coordination point for ATP. N6-succinyllysine is present on lysine 599.

The protein belongs to the ATP-dependent AMP-binding enzyme family.

It localises to the mitochondrion. It catalyses the reaction a medium-chain fatty acid + ATP + CoA = a medium-chain fatty acyl-CoA + AMP + diphosphate. It carries out the reaction octanoate + ATP + CoA = octanoyl-CoA + AMP + diphosphate. Functionally, acyl-CoA synthases catalyze the initial reaction in fatty acid metabolism, by forming a thioester with CoA. Has some preference toward medium-chain substrates. Plays a role in adipocyte differentiation. This chain is Medium-chain acyl-CoA ligase ACSF2, mitochondrial, found in Rattus norvegicus (Rat).